A 1736-amino-acid polypeptide reads, in one-letter code: Centrosomal protein of 152 kDa (1736 aa).

An interaction with PLK4 region spans residues 1-60 (MSLEFGSVALQTQNEDEEFDKEDFEREKELQQLLTDLPHDMLDDELSSPERHDSDCSMDG). The interval 1–127 (MSLEFGSVAL…SGYSPPGKRE (127 aa)) is disordered. 2 stretches are compositionally biased toward basic and acidic residues: residues 61 to 82 (RAAE…DILP) and 94 to 105 (EENRSKTEDQHL). Coiled-coil stretches lie at residues 228 to 481 (IIQL…AELG), 552 to 651 (HLVS…QEFD), 692 to 776 (LEVY…TERQ), 835 to 868 (AAVS…ALRK), 950 to 1075 (NVMS…YEED), and 1205 to 1315 (GHCF…KIKR). Residues 571 to 592 (FQQSKDGDSGMETKTDTSEKTT) form a disordered region. Positions 575–592 (KDGDSGMETKTDTSEKTT) are enriched in basic and acidic residues. Thr-1277 is subject to Phosphothreonine. 4 disordered regions span residues 1416–1479 (GTER…ASTA), 1543–1562 (EKNS…LRSP), 1574–1614 (GSPT…SDST), and 1677–1736 (QQGK…SPLE). Basic and acidic residues predominate over residues 1462–1473 (RRLEESKHREMR). Polar residues-rich tracts occupy residues 1576–1595 (PTET…SQDS) and 1603–1614 (PSSSPAWPSDST). Lys-1714 carries the N6-acetyllysine modification.

It belongs to the CEP152 family. Interacts (via N-terminus) with PLK4; the interaction is mutally exclusive with a PLK4:CEP192 interaction. Interacts (via C-terminus) with CPAP (via-N-terminus). Interacts with CINP. Interacts with CDK5RAP2, WDR62, CEP63 and CEP131. CEP63, CDK5RAP2, CEP152, WDR62 are proposed to form a stepwise assembled complex at the centrosome forming a ring near parental centrioles. Interacts with DEUP1; this interaction recruits CEP152 to the deuterosome. The interactions with CEP63 and DEUP1 are mutually exclusive. Interacts with CCDC66.

Its subcellular location is the cytoplasm. It is found in the cytoskeleton. It localises to the microtubule organizing center. The protein resides in the centrosome. The protein localises to the centriole. Necessary for centrosome duplication; the function also seems to involve CEP63, CDK5RAP2 and WDR62 through a stepwise assembled complex at the centrosome that recruits CDK2 required for centriole duplication. Acts as a molecular scaffold facilitating the interaction of PLK4 and CPAP, 2 molecules involved in centriole formation. Proposed to snatch PLK4 away from PLK4:CEP92 complexes in early G1 daughter centriole and to reposition PLK4 at the outer boundary of a newly forming CEP152 ring structure. Also plays a key role in deuterosome-mediated centriole amplification in multiciliated that can generate more than 100 centrioles. Overexpression of cep152 can drive amplification of centrioles. This chain is Centrosomal protein of 152 kDa (Cep152), found in Mus musculus (Mouse).